The sequence spans 619 residues: 2-succinyl-5-enolpyruvyl-6-hydroxy-3-cyclohexene-1-carboxylate synthase (619 aa).

Positions 385 to 398 (SSAHQSLAATNSDS) are enriched in polar residues. The interval 385 to 415 (SSAHQSLAATNSDSSTDDIIENTDEEGSNES) is disordered. A compositionally biased stretch (acidic residues) spans 399 to 413 (STDDIIENTDEEGSN).

It belongs to the TPP enzyme family. MenD subfamily. In terms of assembly, homodimer. The cofactor is Mg(2+). Requires Mn(2+) as cofactor. Thiamine diphosphate is required as a cofactor.

The enzyme catalyses isochorismate + 2-oxoglutarate + H(+) = 5-enolpyruvoyl-6-hydroxy-2-succinyl-cyclohex-3-ene-1-carboxylate + CO2. It participates in quinol/quinone metabolism; 1,4-dihydroxy-2-naphthoate biosynthesis; 1,4-dihydroxy-2-naphthoate from chorismate: step 2/7. It functions in the pathway quinol/quinone metabolism; menaquinone biosynthesis. Its function is as follows. Catalyzes the thiamine diphosphate-dependent decarboxylation of 2-oxoglutarate and the subsequent addition of the resulting succinic semialdehyde-thiamine pyrophosphate anion to isochorismate to yield 2-succinyl-5-enolpyruvyl-6-hydroxy-3-cyclohexene-1-carboxylate (SEPHCHC). The polypeptide is 2-succinyl-5-enolpyruvyl-6-hydroxy-3-cyclohexene-1-carboxylate synthase (Haloquadratum walsbyi (strain DSM 16790 / HBSQ001)).